Here is a 202-residue protein sequence, read N- to C-terminus: Methylthioribulose-1-phosphate dehydratase (202 aa).

Zn(2+) contacts are provided by His93 and His95.

The protein belongs to the aldolase class II family. MtnB subfamily. The cofactor is Zn(2+).

It carries out the reaction 5-(methylsulfanyl)-D-ribulose 1-phosphate = 5-methylsulfanyl-2,3-dioxopentyl phosphate + H2O. Its pathway is amino-acid biosynthesis; L-methionine biosynthesis via salvage pathway; L-methionine from S-methyl-5-thio-alpha-D-ribose 1-phosphate: step 2/6. Its function is as follows. Catalyzes the dehydration of methylthioribulose-1-phosphate (MTRu-1-P) into 2,3-diketo-5-methylthiopentyl-1-phosphate (DK-MTP-1-P). This is Methylthioribulose-1-phosphate dehydratase from Klebsiella pneumoniae (strain 342).